Here is a 95-residue protein sequence, read N- to C-terminus: MNLKPLADRVIVKPAPAEEKTKGGLYIPDTGKEKPMYGEVVAVGAGKMSDSGQLLAMPVKAGDKVLYGKYSGTEVSVEGEDYLIMRESDIFAILA.

It belongs to the GroES chaperonin family. In terms of assembly, heptamer of 7 subunits arranged in a ring. Interacts with the chaperonin GroEL.

It is found in the cytoplasm. Its function is as follows. Together with the chaperonin GroEL, plays an essential role in assisting protein folding. The GroEL-GroES system forms a nano-cage that allows encapsulation of the non-native substrate proteins and provides a physical environment optimized to promote and accelerate protein folding. GroES binds to the apical surface of the GroEL ring, thereby capping the opening of the GroEL channel. This chain is Co-chaperonin GroES, found in Chlorobium luteolum (strain DSM 273 / BCRC 81028 / 2530) (Pelodictyon luteolum).